Reading from the N-terminus, the 293-residue chain is Ribosomal RNA small subunit methyltransferase H (293 aa).

S-adenosyl-L-methionine-binding positions include 31-33 (GGY), D49, F76, D97, and Q104.

The protein belongs to the methyltransferase superfamily. RsmH family.

It is found in the cytoplasm. The enzyme catalyses cytidine(1402) in 16S rRNA + S-adenosyl-L-methionine = N(4)-methylcytidine(1402) in 16S rRNA + S-adenosyl-L-homocysteine + H(+). Functionally, specifically methylates the N4 position of cytidine in position 1402 (C1402) of 16S rRNA. This Wolbachia sp. subsp. Drosophila simulans (strain wRi) protein is Ribosomal RNA small subunit methyltransferase H.